We begin with the raw amino-acid sequence, 202 residues long: LexA repressor (202 aa).

The segment at residues 28–48 (RAEIAQRLGFRSPNAAEEHLK) is a DNA-binding region (H-T-H motif). Catalysis depends on for autocatalytic cleavage activity residues serine 119 and lysine 156.

This sequence belongs to the peptidase S24 family. In terms of assembly, homodimer.

It catalyses the reaction Hydrolysis of Ala-|-Gly bond in repressor LexA.. In terms of biological role, represses a number of genes involved in the response to DNA damage (SOS response), including recA and lexA. Binds to the 16 bp palindromic sequence 5'-CTGTATATATATACAG-3'. In the presence of single-stranded DNA, RecA interacts with LexA causing an autocatalytic cleavage which disrupts the DNA-binding part of LexA, leading to derepression of the SOS regulon and eventually DNA repair. The protein is LexA repressor of Yersinia pseudotuberculosis serotype O:1b (strain IP 31758).